The chain runs to 107 residues: Sulfurtransferase Alvin_2599 (107 aa).

Positions 16-104 (DTEDVLLVDI…WARHGLPIVA (89 aa)) constitute a Rhodanese domain. The Cysteine persulfide intermediate role is filled by Cys-64.

In terms of assembly, monomer.

The protein localises to the cytoplasm. The protein operates within energy metabolism; sulfur metabolism. In terms of biological role, sulfur carrier protein involved in sulfur trafficking for oxidative dissimilatory sulfur metabolism. Component of a sulfur relay system that starts with the sulfur-mobilizing rhodanese-like protein Rhd_2599 (Alvin_2599), which transfers the sulfur from a low-molecular-weight thiol, maybe glutathione, to the TusA protein (Alvin_2600); TusA serves as the sulfur donor for DsrEFH, which persulfurates DsrC; persulfurated DsrC very probably serves as a direct substrate for reverse-acting sulfite reductase, DsrAB. Is able to catalyze the sulfur transfer reaction from thiosulfate or glutathione (GSSH) to cyanide in vitro, however, thiosulfate is unlikely an in vivo substrate. The sequence is that of Sulfurtransferase Alvin_2599 from Allochromatium vinosum (strain ATCC 17899 / DSM 180 / NBRC 103801 / NCIMB 10441 / D) (Chromatium vinosum).